A 210-amino-acid polypeptide reads, in one-letter code: Large ribosomal subunit protein uL3 (210 aa).

A disordered region spans residues 121 to 150; that stretch reads GGIKRHGFHRGPMAHGSKYHRRPGSLGAKG.

The protein belongs to the universal ribosomal protein uL3 family. In terms of assembly, part of the 50S ribosomal subunit. Forms a cluster with proteins L14 and L19.

Functionally, one of the primary rRNA binding proteins, it binds directly near the 3'-end of the 23S rRNA, where it nucleates assembly of the 50S subunit. In Pelotomaculum thermopropionicum (strain DSM 13744 / JCM 10971 / SI), this protein is Large ribosomal subunit protein uL3.